The sequence spans 130 residues: Small ribosomal subunit protein uS8A (130 aa).

This sequence belongs to the universal ribosomal protein uS8 family. In terms of assembly, component of the small ribosomal subunit (SSU). Mature yeast ribosomes consist of a small (40S) and a large (60S) subunit. The 40S small subunit contains 1 molecule of ribosomal RNA (18S rRNA) and 33 different proteins (encoded by 57 genes). The large 60S subunit contains 3 rRNA molecules (25S, 5.8S and 5S rRNA) and 46 different proteins (encoded by 81 genes).

Its subcellular location is the cytoplasm. In terms of biological role, component of the ribosome, a large ribonucleoprotein complex responsible for the synthesis of proteins in the cell. The small ribosomal subunit (SSU) binds messenger RNAs (mRNAs) and translates the encoded message by selecting cognate aminoacyl-transfer RNA (tRNA) molecules. The large subunit (LSU) contains the ribosomal catalytic site termed the peptidyl transferase center (PTC), which catalyzes the formation of peptide bonds, thereby polymerizing the amino acids delivered by tRNAs into a polypeptide chain. The nascent polypeptides leave the ribosome through a tunnel in the LSU and interact with protein factors that function in enzymatic processing, targeting, and the membrane insertion of nascent chains at the exit of the ribosomal tunnel. The sequence is that of Small ribosomal subunit protein uS8A from Saccharomyces cerevisiae (strain ATCC 204508 / S288c) (Baker's yeast).